The sequence spans 343 residues: Methionine import ATP-binding protein MetN (343 aa).

Positions 2–241 constitute an ABC transporter domain; the sequence is IKLSNITKVF…PKTPLAQKFI (240 aa). 38 to 45 lines the ATP pocket; sequence GASGAGKS.

This sequence belongs to the ABC transporter superfamily. Methionine importer (TC 3.A.1.24) family. As to quaternary structure, the complex is composed of two ATP-binding proteins (MetN), two transmembrane proteins (MetI) and a solute-binding protein (MetQ).

It localises to the cell inner membrane. It carries out the reaction L-methionine(out) + ATP + H2O = L-methionine(in) + ADP + phosphate + H(+). The catalysed reaction is D-methionine(out) + ATP + H2O = D-methionine(in) + ADP + phosphate + H(+). Part of the ABC transporter complex MetNIQ involved in methionine import. Responsible for energy coupling to the transport system. This chain is Methionine import ATP-binding protein MetN, found in Shigella flexneri serotype 5b (strain 8401).